A 232-amino-acid polypeptide reads, in one-letter code: Phosphatidylserine decarboxylase proenzyme (232 aa).

The active-site Schiff-base intermediate with substrate; via pyruvic acid is Ser201. Residue Ser201 is modified to Pyruvic acid (Ser); by autocatalysis.

The protein belongs to the phosphatidylserine decarboxylase family. PSD-A subfamily. As to quaternary structure, heterodimer of a large membrane-associated beta subunit and a small pyruvoyl-containing alpha subunit. It depends on pyruvate as a cofactor. Post-translationally, is synthesized initially as an inactive proenzyme. Formation of the active enzyme involves a self-maturation process in which the active site pyruvoyl group is generated from an internal serine residue via an autocatalytic post-translational modification. Two non-identical subunits are generated from the proenzyme in this reaction, and the pyruvate is formed at the N-terminus of the alpha chain, which is derived from the carboxyl end of the proenzyme. The post-translation cleavage follows an unusual pathway, termed non-hydrolytic serinolysis, in which the side chain hydroxyl group of the serine supplies its oxygen atom to form the C-terminus of the beta chain, while the remainder of the serine residue undergoes an oxidative deamination to produce ammonia and the pyruvoyl prosthetic group on the alpha chain.

The protein resides in the cell membrane. The enzyme catalyses a 1,2-diacyl-sn-glycero-3-phospho-L-serine + H(+) = a 1,2-diacyl-sn-glycero-3-phosphoethanolamine + CO2. The protein operates within phospholipid metabolism; phosphatidylethanolamine biosynthesis; phosphatidylethanolamine from CDP-diacylglycerol: step 2/2. Its function is as follows. Catalyzes the formation of phosphatidylethanolamine (PtdEtn) from phosphatidylserine (PtdSer). This is Phosphatidylserine decarboxylase proenzyme from Mycolicibacterium gilvum (strain PYR-GCK) (Mycobacterium gilvum (strain PYR-GCK)).